The primary structure comprises 377 residues: Alanine racemase (377 aa).

Lys39 acts as the Proton acceptor; specific for D-alanine in catalysis. Lys39 is subject to N6-(pyridoxal phosphate)lysine. Arg137 lines the substrate pocket. The Proton acceptor; specific for L-alanine role is filled by Tyr266. Position 314 (Met314) interacts with substrate.

This sequence belongs to the alanine racemase family. Requires pyridoxal 5'-phosphate as cofactor.

The catalysed reaction is L-alanine = D-alanine. It participates in amino-acid biosynthesis; D-alanine biosynthesis; D-alanine from L-alanine: step 1/1. Catalyzes the interconversion of L-alanine and D-alanine. May also act on other amino acids. The polypeptide is Alanine racemase (alr) (Symbiobacterium thermophilum (strain DSM 24528 / JCM 14929 / IAM 14863 / T)).